The primary structure comprises 197 residues: Nucleoside triphosphate pyrophosphatase (197 aa).

The Proton acceptor role is filled by D71.

This sequence belongs to the Maf family. It depends on a divalent metal cation as a cofactor.

The protein localises to the cytoplasm. It catalyses the reaction a ribonucleoside 5'-triphosphate + H2O = a ribonucleoside 5'-phosphate + diphosphate + H(+). It carries out the reaction a 2'-deoxyribonucleoside 5'-triphosphate + H2O = a 2'-deoxyribonucleoside 5'-phosphate + diphosphate + H(+). Its function is as follows. Nucleoside triphosphate pyrophosphatase. May have a dual role in cell division arrest and in preventing the incorporation of modified nucleotides into cellular nucleic acids. The protein is Nucleoside triphosphate pyrophosphatase of Trichormus variabilis (strain ATCC 29413 / PCC 7937) (Anabaena variabilis).